Here is a 447-residue protein sequence, read N- to C-terminus: Tubulin beta chain (447 aa).

GTP-binding residues include glutamine 11, glutamate 69, serine 138, glycine 142, threonine 143, glycine 144, asparagine 204, and asparagine 226. Glutamate 69 serves as a coordination point for Mg(2+). Residues 425–447 (YQDASISEGEEEYEEEVPIEGEE) form a disordered region. A compositionally biased stretch (acidic residues) spans 432–447 (EGEEEYEEEVPIEGEE).

Belongs to the tubulin family. Dimer of alpha and beta chains. A typical microtubule is a hollow water-filled tube with an outer diameter of 25 nm and an inner diameter of 15 nM. Alpha-beta heterodimers associate head-to-tail to form protofilaments running lengthwise along the microtubule wall with the beta-tubulin subunit facing the microtubule plus end conferring a structural polarity. Microtubules usually have 13 protofilaments but different protofilament numbers can be found in some organisms and specialized cells. Requires Mg(2+) as cofactor.

Its subcellular location is the cytoplasm. The protein localises to the cytoskeleton. Functionally, tubulin is the major constituent of microtubules, a cylinder consisting of laterally associated linear protofilaments composed of alpha- and beta-tubulin heterodimers. Microtubules grow by the addition of GTP-tubulin dimers to the microtubule end, where a stabilizing cap forms. Below the cap, tubulin dimers are in GDP-bound state, owing to GTPase activity of alpha-tubulin. The polypeptide is Tubulin beta chain (tubA) (Botryotinia fuckeliana (Noble rot fungus)).